Here is a 106-residue protein sequence, read N- to C-terminus: Adipokinetic hormone/corazonin-related peptide (106 aa).

The signal sequence occupies residues 1–25 (MRNSIYKLIMFAVLCMVLTSSLSYA). Pyrrolidone carboxylic acid is present on Q26. A35 is modified (alanine amide). The propeptide occupies 39-106 (SLAEAAQSTG…GLPLFSNGHL (68 aa)).

The protein belongs to the AKH/HRTH/RPCH family. As to expression, only expressed in the head and thorax body segments of adults. Is more expressed in adult males than in females.

Its subcellular location is the secreted. In terms of biological role, neuropeptide with neuromodulator or neurotransmitter role that activates the adipokinetic hormone/corazonin-related peptide receptor (ACPR). May function in regulation of post-ecdysis activities. Does not activate the A.gambiae adipokinetic hormone (AKH) and corazonin (CRZ) receptors. The protein is Adipokinetic hormone/corazonin-related peptide of Aedes aegypti (Yellowfever mosquito).